A 237-amino-acid polypeptide reads, in one-letter code: Probable septum site-determining protein MinC (237 aa).

Belongs to the MinC family. In terms of assembly, interacts with MinD and FtsZ.

Cell division inhibitor that blocks the formation of polar Z ring septums. Rapidly oscillates between the poles of the cell to destabilize FtsZ filaments that have formed before they mature into polar Z rings. Prevents FtsZ polymerization. The sequence is that of Probable septum site-determining protein MinC from Neisseria gonorrhoeae.